A 715-amino-acid polypeptide reads, in one-letter code: Discoidin, CUB and LCCL domain-containing protein 1 (715 aa).

The N-terminal stretch at 1-34 (MVPGARGGGALARAAGRGLLALLLAVSAPLRLQA) is a signal peptide. Residues 35–459 (EELGDGCGHL…TSTGINITTV (425 aa)) lie on the Extracellular side of the membrane. 2 disulfides stabilise this stretch: Cys-41-Cys-68 and Cys-94-Cys-112. The CUB domain maps to 41–150 (CGHLVTYQDS…RGFLLTYASS (110 aa)). The N-linked (GlcNAc...) asparagine glycan is linked to Asn-64. Residue Asn-124 is glycosylated (N-linked (GlcNAc...) asparagine). One can recognise an LCCL domain in the interval 152–248 (HPDLITCLER…RDGSLSDKRF (97 aa)). 2 disulfide bridges follow: Cys-158-Cys-174 and Cys-178-Cys-200. An F5/8 type C domain is found at 248 to 412 (FLFTSNGCSR…IALKVELIGC (165 aa)). The N-linked (GlcNAc...) asparagine glycan is linked to Asn-277. The tract at residues 278 to 312 (ESGDQVHWSPGQARLQDQGPSWASGDSSNNHKPRE) is disordered. Positions 295–307 (QGPSWASGDSSNN) are enriched in polar residues. Residues Asn-351, Asn-418, and Asn-455 are each glycosylated (N-linked (GlcNAc...) asparagine). Residues 460 to 480 (AIPLVLLVVLVFAGMGIFAAF) traverse the membrane as a helical segment. Residues 481-715 (RKKKKKGSPY…LNQTAMTALL (235 aa)) lie on the Cytoplasmic side of the membrane. Ser-513 bears the Phosphoserine mark. Thr-614 bears the Phosphothreonine mark. The segment at 619–702 (SGYRVPGPQP…SDSYSAPRDC (84 aa)) is disordered.

Its subcellular location is the membrane. The protein is Discoidin, CUB and LCCL domain-containing protein 1 (DCBLD1) of Homo sapiens (Human).